Here is a 635-residue protein sequence, read N- to C-terminus: Probable monoacyl phosphatidylinositol tetramannoside-binding protein LpqW (635 aa).

A signal peptide spans 1–26 (MGVPSPVRRVCVTVGALVALACMVLA). Disordered stretches follow at residues 32-52 (PPPAPQSTDTPRSTPPPPRRP), 389-412 (NTSVSPAPSVPDSTTTSVSTGPPE), and 511-551 (NAPT…LVKA). 2 stretches are compositionally biased toward low complexity: residues 390-411 (TSVSPAPSVPDSTTTSVSTGPP) and 511-531 (NAPTTAPSAPIGPTPSAAPDT).

This sequence belongs to the bacterial solute-binding protein 5 family.

It functions in the pathway phospholipid metabolism; phosphatidylinositol metabolism. Its function is as follows. May directly or indirectly regulate the accessibility of the key branch point intermediate, monoacyl phosphatidylinositol tetramannoside (AcPIM4), to the elongating alpha-1,6 mannosyltransferases which could regulate the lipoarabinomannans (LAMs) biosynthesis. The sequence is that of Probable monoacyl phosphatidylinositol tetramannoside-binding protein LpqW (lpqW) from Mycobacterium tuberculosis (strain CDC 1551 / Oshkosh).